Consider the following 283-residue polypeptide: Release factor glutamine methyltransferase (283 aa).

2 residues coordinate S-adenosyl-L-methionine: Asp143 and Asn189. A substrate-binding site is contributed by 189 to 192; the sequence is NPPY.

It belongs to the protein N5-glutamine methyltransferase family. PrmC subfamily.

It carries out the reaction L-glutaminyl-[peptide chain release factor] + S-adenosyl-L-methionine = N(5)-methyl-L-glutaminyl-[peptide chain release factor] + S-adenosyl-L-homocysteine + H(+). Its function is as follows. Methylates the class 1 translation termination release factors RF1/PrfA and RF2/PrfB on the glutamine residue of the universally conserved GGQ motif. The polypeptide is Release factor glutamine methyltransferase (Clostridium botulinum (strain Hall / ATCC 3502 / NCTC 13319 / Type A)).